A 353-amino-acid polypeptide reads, in one-letter code: UDP-3-O-acylglucosamine N-acyltransferase (353 aa).

H242 functions as the Proton acceptor in the catalytic mechanism.

It belongs to the transferase hexapeptide repeat family. LpxD subfamily. In terms of assembly, homotrimer.

It catalyses the reaction a UDP-3-O-[(3R)-3-hydroxyacyl]-alpha-D-glucosamine + a (3R)-hydroxyacyl-[ACP] = a UDP-2-N,3-O-bis[(3R)-3-hydroxyacyl]-alpha-D-glucosamine + holo-[ACP] + H(+). It functions in the pathway bacterial outer membrane biogenesis; LPS lipid A biosynthesis. Functionally, catalyzes the N-acylation of UDP-3-O-acylglucosamine using 3-hydroxyacyl-ACP as the acyl donor. Is involved in the biosynthesis of lipid A, a phosphorylated glycolipid that anchors the lipopolysaccharide to the outer membrane of the cell. In Pseudomonas aeruginosa (strain LESB58), this protein is UDP-3-O-acylglucosamine N-acyltransferase.